The following is a 331-amino-acid chain: MDRAAVARVGAVASASVCAVVAGVVLAQYIFTLKRKTGRKTKIIEMMPEFQKSSVRIKNPTRVEEIICGLIKGGAAKLQIITDFDMTLSRFSYNGKRCPTCHNIIDNCKLVTDECRRKLLQLKEQYYAIEVDPVLTVEEKFPYMVEWYTKSHGLLIEQGIPKAKLKEIVADSDVMLKEGYENFFGKLQQHGIPVFIFSAGIGDVLEEVIRQAGVYHSNVKVVSNFMDFDENGVLKGFKGELIHVFNKHDGALKNTDYFSQLKDNSNIILLGDSQGDLRMADGVANVEHILKIGYLNDRVDELLEKYMDSYDIVLVKEESLEVVNSILQKTL.

Aspartate 83 (nucleophile) is an active-site residue. Residues aspartate 83 and aspartate 85 each contribute to the Mg(2+) site. Aspartate 85 (proton donor) is an active-site residue. A CMP-binding site is contributed by glutamate 130. Residues glutamate 130 and serine 151 each contribute to the N(7)-methyl-GMP site. Substrate contacts are provided by residues 198–200 and lysine 247; that span reads SAG. Aspartate 272 is a binding site for Mg(2+). The residue at position 273 (serine 273) is a Phosphoserine.

This sequence belongs to the pyrimidine 5'-nucleotidase family. In terms of assembly, monomer. Isoform 2 is highly expressed in the brain, heart, spleen, kidney and blood. Isoform 2 is expressed (at protein level) in the spleen, skeletal muscle and gastrointestinal epithelia.

The protein localises to the cytoplasm. It catalyses the reaction N(7)-methyl-GMP + H2O = N(7)-methylguanosine + phosphate. The enzyme catalyses a ribonucleoside 5'-phosphate + H2O = a ribonucleoside + phosphate. Functionally, nucleotidase which shows specific activity towards cytidine monophosphate (CMP) and 7-methylguanosine monophosphate (m(7)GMP). CMP seems to be the preferred substrate. The sequence is that of Cytosolic 5'-nucleotidase 3A (Nt5c3a) from Mus musculus (Mouse).